Here is a 776-residue protein sequence, read N- to C-terminus: Probable E3 ubiquitin-protein ligase HECTD2 (776 aa).

The tract at residues 1–46 (MSEAVRVPSPATPLVVAAPAPEERKGKESEREKLPPIVSAGAGATA) is disordered. The span at 7–20 (VPSPATPLVVAAPA) shows a compositional bias: low complexity. Position 9 is a phosphoserine (Ser-9). Residues 21–34 (PEERKGKESEREKL) are compositionally biased toward basic and acidic residues. Residues 437 to 776 (KRADLKKKLK…ISNSEGFGLE (340 aa)) enclose the HECT domain. Cys-744 acts as the Glycyl thioester intermediate in catalysis.

The catalysed reaction is S-ubiquitinyl-[E2 ubiquitin-conjugating enzyme]-L-cysteine + [acceptor protein]-L-lysine = [E2 ubiquitin-conjugating enzyme]-L-cysteine + N(6)-ubiquitinyl-[acceptor protein]-L-lysine.. It participates in protein modification; protein ubiquitination. Its function is as follows. E3 ubiquitin-protein ligase which accepts ubiquitin from an E2 ubiquitin-conjugating enzyme in the form of a thioester and then directly transfers the ubiquitin to targeted substrates. Functionally, (Microbial infection) Catalyzes ubiquitination of Botulinum neurotoxin A light chain (LC) of C.botulinum neurotoxin type A (BoNT/A). In Homo sapiens (Human), this protein is Probable E3 ubiquitin-protein ligase HECTD2.